The sequence spans 117 residues: Large ribosomal subunit protein bL20 (117 aa).

It belongs to the bacterial ribosomal protein bL20 family.

Functionally, binds directly to 23S ribosomal RNA and is necessary for the in vitro assembly process of the 50S ribosomal subunit. It is not involved in the protein synthesizing functions of that subunit. In Carboxydothermus hydrogenoformans (strain ATCC BAA-161 / DSM 6008 / Z-2901), this protein is Large ribosomal subunit protein bL20.